We begin with the raw amino-acid sequence, 107 residues long: U1-lycotoxin-Ls1b (107 aa).

An N-terminal signal peptide occupies residues 1–20 (MMKVLVVVALLVTLISYSSS). The propeptide occupies 21–41 (EGIDDLEADELLSLMANEQTR). 4 disulfide bridges follow: cysteine 44/cysteine 59, cysteine 51/cysteine 68, cysteine 58/cysteine 86, and cysteine 70/cysteine 84.

The protein belongs to the neurotoxin 19 (CSTX) family. 04 (U1-Lctx) subfamily. In terms of tissue distribution, expressed by the venom gland.

It localises to the secreted. The chain is U1-lycotoxin-Ls1b from Lycosa singoriensis (Wolf spider).